We begin with the raw amino-acid sequence, 142 residues long: Gonadotropin subunit beta-2 (142 aa).

The first 23 residues, 1-23, serve as a signal peptide directing secretion; it reads MLGLHVGTLISLFLCILLEPIEG. 6 disulfide bridges follow: Cys29/Cys77, Cys43/Cys92, Cys46/Cys130, Cys54/Cys108, Cys58/Cys110, and Cys113/Cys120. N-linked (GlcNAc...) asparagine glycosylation is present at Asn33.

This sequence belongs to the glycoprotein hormones subunit beta family. Heterodimer of an alpha and a beta chain.

Its subcellular location is the secreted. Its function is as follows. Involved in gametogenesis and steroidogenesis. The sequence is that of Gonadotropin subunit beta-2 (cgbb) from Oncorhynchus tshawytscha (Chinook salmon).